Consider the following 1108-residue polypeptide: Lon protease homolog, mitochondrial (1108 aa).

A mitochondrion-targeting transit peptide spans 1 to 62; it reads MLRGQSLPWR…RAFSTSSIRR (62 aa). 2 disordered regions span residues 24 to 192 and 299 to 318; these read PLLP…QKPS and LPPGEQSKAGNTEDKAPEKK. The segment covering 36–53 has biased composition (low complexity); sequence RSNLSISRLSRSPSLSPR. 2 stretches are compositionally biased toward basic and acidic residues: residues 78 to 103 and 119 to 146; these read EQKDPNEQKDSDRSPEGRRRSPDSTG and KVAGEKEQRGVEEDAKKENVSIEGKSDP. A compositionally biased stretch (polar residues) spans 161-171; sequence SDTKSSASNGG. 2 stretches are compositionally biased toward basic and acidic residues: residues 174–188 and 309–318; these read DGGRKGKKGSGDRAL and NTEDKAPEKK. The region spanning 200–452 is the Lon N-terminal domain; it reads VMAIPIAKRP…KALVVLKKEL (253 aa). 605–612 is a binding site for ATP; that stretch reads GPPGVGKT. The span at 821–855 shows a compositional bias: basic and acidic residues; sequence DKALTDEGKAAQEESKKETEEGDPKDPPADPEKST. A disordered region spans residues 821–862; that stretch reads DKALTDEGKAAQEESKKETEEGDPKDPPADPEKSTTETPRLA. A Lon proteolytic domain is found at 895-1081; it reads TFPPGVTMGL…SEVFNILFAE (187 aa). Catalysis depends on residues Ser-987 and Lys-1030.

The protein belongs to the peptidase S16 family. As to quaternary structure, homohexamer or homoheptamer. Organized in a ring with a central cavity.

It localises to the mitochondrion matrix. It carries out the reaction Hydrolysis of proteins in presence of ATP.. ATP-dependent serine protease that mediates the selective degradation of misfolded, unassembled or oxidatively damaged polypeptides as well as certain short-lived regulatory proteins in the mitochondrial matrix. May also have a chaperone function in the assembly of inner membrane protein complexes. Participates in the regulation of mitochondrial gene expression and in the maintenance of the integrity of the mitochondrial genome. Binds to mitochondrial DNA in a site-specific manner. The polypeptide is Lon protease homolog, mitochondrial (pim1) (Aspergillus fumigatus (strain ATCC MYA-4609 / CBS 101355 / FGSC A1100 / Af293) (Neosartorya fumigata)).